A 105-amino-acid chain; its full sequence is Large ribosomal subunit protein uL24 (105 aa).

This sequence belongs to the universal ribosomal protein uL24 family. In terms of assembly, part of the 50S ribosomal subunit.

One of two assembly initiator proteins, it binds directly to the 5'-end of the 23S rRNA, where it nucleates assembly of the 50S subunit. Functionally, one of the proteins that surrounds the polypeptide exit tunnel on the outside of the subunit. This chain is Large ribosomal subunit protein uL24, found in Xanthomonas campestris pv. campestris (strain 8004).